A 575-amino-acid chain; its full sequence is V-type ATP synthase alpha chain (575 aa).

238 to 245 (GPFGAGKT) is a binding site for ATP.

The protein belongs to the ATPase alpha/beta chains family.

It catalyses the reaction ATP + H2O + 4 H(+)(in) = ADP + phosphate + 5 H(+)(out). In terms of biological role, produces ATP from ADP in the presence of a proton gradient across the membrane. The V-type alpha chain is a catalytic subunit. In Borreliella afzelii (strain PKo) (Borrelia afzelii), this protein is V-type ATP synthase alpha chain.